The following is a 705-amino-acid chain: Elongation factor G (705 aa).

In terms of domain architecture, tr-type G spans 8–290 (ERYRNFGIMA…GVVHLLPSPA (283 aa)). Residues 17-24 (AHIDAGKT), 88-92 (DTPGH), and 142-145 (NKMD) contribute to the GTP site. The segment at 290 to 309 (ADRPPVQGIDEDEKEDTRAA) is disordered.

This sequence belongs to the TRAFAC class translation factor GTPase superfamily. Classic translation factor GTPase family. EF-G/EF-2 subfamily.

It is found in the cytoplasm. In terms of biological role, catalyzes the GTP-dependent ribosomal translocation step during translation elongation. During this step, the ribosome changes from the pre-translocational (PRE) to the post-translocational (POST) state as the newly formed A-site-bound peptidyl-tRNA and P-site-bound deacylated tRNA move to the P and E sites, respectively. Catalyzes the coordinated movement of the two tRNA molecules, the mRNA and conformational changes in the ribosome. This is Elongation factor G from Xanthomonas axonopodis pv. citri (strain 306).